A 193-amino-acid polypeptide reads, in one-letter code: Large ribosomal subunit protein bL17m (193 aa).

It belongs to the bacterial ribosomal protein bL17 family. As to quaternary structure, component of the mitochondrial large ribosomal subunit (mt-LSU). Mature N.crassa 74S mitochondrial ribosomes consist of a small (37S) and a large (54S) subunit. The 37S small subunit contains a 16S ribosomal RNA (16S mt-rRNA) and 32 different proteins. The 54S large subunit contains a 23S rRNA (23S mt-rRNA) and 42 different proteins.

Its subcellular location is the mitochondrion. Its function is as follows. Component of the mitochondrial ribosome (mitoribosome), a dedicated translation machinery responsible for the synthesis of mitochondrial genome-encoded proteins, including at least some of the essential transmembrane subunits of the mitochondrial respiratory chain. The mitoribosomes are attached to the mitochondrial inner membrane and translation products are cotranslationally integrated into the membrane. The sequence is that of Large ribosomal subunit protein bL17m (mrpl8) from Neurospora crassa (strain ATCC 24698 / 74-OR23-1A / CBS 708.71 / DSM 1257 / FGSC 987).